Consider the following 590-residue polypeptide: Glutamine--fructose-6-phosphate aminotransferase [isomerizing] (590 aa).

Residue Cys-2 is the Nucleophile; for GATase activity of the active site. In terms of domain architecture, Glutamine amidotransferase type-2 spans 2–221 (CGIIGIVSSK…DGELGFITTS (220 aa)). SIS domains lie at 286–422 (IIAE…DNTN) and 445–580 (IGEE…PDKP). The active-site For Fru-6P isomerization activity is Lys-585.

Homodimer.

It localises to the cytoplasm. It carries out the reaction D-fructose 6-phosphate + L-glutamine = D-glucosamine 6-phosphate + L-glutamate. Functionally, catalyzes the first step in hexosamine metabolism, converting fructose-6P into glucosamine-6P using glutamine as a nitrogen source. In Sulfolobus acidocaldarius (strain ATCC 33909 / DSM 639 / JCM 8929 / NBRC 15157 / NCIMB 11770), this protein is Glutamine--fructose-6-phosphate aminotransferase [isomerizing].